Consider the following 165-residue polypeptide: 3-isopropylmalate dehydratase small subunit (165 aa).

The protein belongs to the LeuD family. LeuD type 2 subfamily. Heterodimer of LeuC and LeuD.

It catalyses the reaction (2R,3S)-3-isopropylmalate = (2S)-2-isopropylmalate. Its pathway is amino-acid biosynthesis; L-leucine biosynthesis; L-leucine from 3-methyl-2-oxobutanoate: step 2/4. Functionally, catalyzes the isomerization between 2-isopropylmalate and 3-isopropylmalate, via the formation of 2-isopropylmaleate. The polypeptide is 3-isopropylmalate dehydratase small subunit (Helicobacter hepaticus (strain ATCC 51449 / 3B1)).